Reading from the N-terminus, the 581-residue chain is Jasmonoyl--L-amino acid synthetase GH3.5 (581 aa).

Serine 92 is an ATP binding site. Serine 95 contacts jasmonate. ATP contacts are provided by residues threonine 115, asparagine 161, and 324 to 329 (GASEGW). 159-163 (TTNLY) serves as a coordination point for an L-alpha-amino acid. Residues 321 to 324 (ADYG) and serine 326 each bind jasmonate. 534 to 538 (EILDH) provides a ligand contact to an L-alpha-amino acid. Lysine 561 is a binding site for ATP.

This sequence belongs to the IAA-amido conjugating enzyme family. Expressed in green shoots, roots and flowers.

The enzyme catalyses a jasmonate + an L-alpha-amino acid + ATP = a jasmonyl-L-amino acid + AMP + diphosphate + H(+). Functionally, catalyzes the synthesis of jasmonate-amino acid conjugates by adenylation. Catalyzes the conjugation of jasmonate (JA) to Ile when expressed in a heterologous system (E.coli). Catalyzes in vitro the conjugation of jasmonate (JA) to Ile, Phe, Cys, Leu, Met, Ala, Val and Trp. Involved in the production of JA-Ile in response to infection by the rice blast fungus Magnaporthe oryzae. Required for the accumulation of the flavonoid phytoalexin sakuranetin in response to infection by the rice blast fungus. Involved in herbivory-induced JA-Ile accumulation. Involved in the production of JA-Ile in response to wounding. Required for modulation of light and JA signaling in photomorphogenesis. Required for normal seed development. Required for optimal flower opening and closing and anther dehiscence. May catalyze the synthesis of indole-3-acetic acid (IAA)-amino acid conjugates, providing a mechanism for the plant to cope with the presence of excess auxin. The chain is Jasmonoyl--L-amino acid synthetase GH3.5 from Oryza sativa subsp. japonica (Rice).